The chain runs to 113 residues: Coat protein TP1 (113 aa).

Its subcellular location is the virion. In Thermoproteus tenax virus 1 (strain KRA1) (TTV1), this protein is Coat protein TP1.